The following is a 421-amino-acid chain: Methionine aminopeptidase 2 (421 aa).

The segment at 1–53 is disordered; it reads MTDAEIENSPASDLKELNLENEGVEQQDQAKADESDPVESKKKKNKKKKKKKS. Over residues 28-40 the composition is skewed to basic and acidic residues; it reads DQAKADESDPVES. A Phosphoserine modification is found at Ser35. Over residues 41–53 the composition is skewed to basic residues; it reads KKKKNKKKKKKKS. Residue His174 coordinates substrate. Residues Asp194, Asp205, and His274 each contribute to the a divalent metal cation site. His282 serves as a coordination point for substrate. Residues Glu307 and Glu402 each coordinate a divalent metal cation.

Belongs to the peptidase M24A family. Methionine aminopeptidase eukaryotic type 2 subfamily. Co(2+) is required as a cofactor. Requires Zn(2+) as cofactor. The cofactor is Mn(2+). It depends on Fe(2+) as a cofactor.

Its subcellular location is the cytoplasm. The enzyme catalyses Release of N-terminal amino acids, preferentially methionine, from peptides and arylamides.. Functionally, cotranslationally removes the N-terminal methionine from nascent proteins. The N-terminal methionine is often cleaved when the second residue in the primary sequence is small and uncharged (Met-Ala-, Cys, Gly, Pro, Ser, Thr, or Val). In Saccharomyces cerevisiae (strain RM11-1a) (Baker's yeast), this protein is Methionine aminopeptidase 2.